The primary structure comprises 1631 residues: Ras GTPase-activating-like protein IQGAP3 (1631 aa).

Residues 34–149 (LCRLEEAKRW…YCIHALSLFL (116 aa)) form the Calponin-homology (CH) domain. Tyr162 bears the Phosphotyrosine mark. Ser539 carries the phosphoserine modification. 4 consecutive IQ domains span residues 730 to 759 (NVGFVIQLQARLRGFLVRQKFAEHSHFLRT), 760 to 789 (WLPAVIKIQAHWRGYRQRKIYLEWLQYFKA), 790 to 819 (NLDAIIKIQAWARMWAARRQYLRRLHYFQK), and 820 to 849 (NVNSIVKIQAFFRARKAQDDYRILVHAPHP). In terms of domain architecture, Ras-GAP spans 1004 to 1253 (YLLLQLFKTA…LKFRKFIHRA (250 aa)). Ser1424 carries the post-translational modification Phosphoserine.

The chain is Ras GTPase-activating-like protein IQGAP3 (IQGAP3) from Homo sapiens (Human).